We begin with the raw amino-acid sequence, 961 residues long: Phosphofurin acidic cluster sorting protein 1 (961 aa).

The segment covering 1–19 (MAERGGAGGGPGGAGGGSS) has biased composition (gly residues). Disordered regions lie at residues 1 to 70 (MAER…SSST) and 76 to 95 (VAVA…RTPA). Ala2 is subject to N-acetylalanine. The span at 20-30 (QRGSGVAQSPQ) shows a compositional bias: low complexity. At Ser28 the chain carries Phosphoserine. Residues 31 to 46 (QQPPQQPSQPQQPTPP) show a composition bias toward pro residues. The residue at position 44 (Thr44) is a Phosphothreonine. Positions 51–70 (ATSSSSSTSAAAASSSSSST) are enriched in low complexity. Tyr249 carries the post-translational modification Phosphotyrosine. Residues 260–271 (GIKSKLSDRSPD) show a composition bias toward basic and acidic residues. Disordered regions lie at residues 260–297 (GIKS…LHGQ) and 375–426 (NPSD…GKDT). Over residues 274-291 (NYSEEEEESFSSEQEGSD) the composition is skewed to acidic residues. A coiled-coil region spans residues 351 to 375 (HVSREQIREVEEDLDELYDSLEMYN). Residues Ser377 and Ser379 each carry the phosphoserine modification. Residues 404–426 (MSQSSSQTEIGSLNSKGSLGKDT) are compositionally biased toward polar residues. A phosphoserine mark is found at Ser428 and Ser493. Disordered stretches follow at residues 475–540 (EKVK…HSTQ) and 758–802 (SPST…SMSS). Residue Thr502 is modified to Phosphothreonine. A phosphoserine mark is found at Ser517, Ser526, Ser527, Ser529, and Ser532. Over residues 768 to 802 (SPVVSLTVPSTSPPSSSGLSRDATATPPSSPSMSS) the composition is skewed to low complexity.

The protein belongs to the PACS family. As to quaternary structure, associates with AP-1 and AP-3 but not with AP-2 complexes. Interacts with FURIN. Forms a ternary complex with furin and AP-1. Interacts with PKD2 (via acidic region). Interacts with SORL1. Interacts with WDR37.

It localises to the golgi apparatus. Its subcellular location is the trans-Golgi network. In terms of biological role, coat protein that is involved in the localization of trans-Golgi network (TGN) membrane proteins that contain acidic cluster sorting motifs. Controls the endosome-to-Golgi trafficking of furin and mannose-6-phosphate receptor by connecting the acidic-cluster-containing cytoplasmic domain of these molecules with the adapter-protein complex-1 (AP-1) of endosomal clathrin-coated membrane pits. Required for normal ER Ca2+ handling in lymphocytes. Together with WDR37, it plays an essential role in lymphocyte development, quiescence and survival. Required for stabilizing peripheral lymphocyte populations. The protein is Phosphofurin acidic cluster sorting protein 1 (Pacs1) of Rattus norvegicus (Rat).